We begin with the raw amino-acid sequence, 424 residues long: Imidazolonepropionase (424 aa).

Positions 84 and 86 each coordinate Fe(3+). Zn(2+)-binding residues include His84 and His86. Residues Arg93, Tyr156, and His189 each contribute to the 4-imidazolone-5-propanoate site. N-formimidoyl-L-glutamate is bound at residue Tyr156. Position 254 (His254) interacts with Fe(3+). His254 contributes to the Zn(2+) binding site. A 4-imidazolone-5-propanoate-binding site is contributed by Glu257. Asp328 serves as a coordination point for Fe(3+). Residue Asp328 coordinates Zn(2+). The N-formimidoyl-L-glutamate site is built by Asn330 and Gly332. Ser333 is a binding site for 4-imidazolone-5-propanoate.

It belongs to the metallo-dependent hydrolases superfamily. HutI family. Zn(2+) is required as a cofactor. It depends on Fe(3+) as a cofactor.

The protein localises to the cytoplasm. The catalysed reaction is 4-imidazolone-5-propanoate + H2O = N-formimidoyl-L-glutamate. Its pathway is amino-acid degradation; L-histidine degradation into L-glutamate; N-formimidoyl-L-glutamate from L-histidine: step 3/3. Catalyzes the hydrolytic cleavage of the carbon-nitrogen bond in imidazolone-5-propanoate to yield N-formimidoyl-L-glutamate. It is the third step in the universal histidine degradation pathway. This is Imidazolonepropionase from Geobacillus sp. (strain WCH70).